A 355-amino-acid chain; its full sequence is 3-isopropylmalate dehydrogenase (355 aa).

An NAD(+)-binding site is contributed by 78 to 91 (GYKWDNLPRPERPE). Arginine 98, arginine 136, and aspartate 226 together coordinate substrate. Aspartate 226, aspartate 250, and aspartate 254 together coordinate Mg(2+). 284-296 (GSAPDIAGQDKAN) contacts NAD(+).

Belongs to the isocitrate and isopropylmalate dehydrogenases family. LeuB type 1 subfamily. In terms of assembly, homodimer. Requires Mg(2+) as cofactor. It depends on Mn(2+) as a cofactor.

The protein resides in the cytoplasm. It carries out the reaction (2R,3S)-3-isopropylmalate + NAD(+) = 4-methyl-2-oxopentanoate + CO2 + NADH. It participates in amino-acid biosynthesis; L-leucine biosynthesis; L-leucine from 3-methyl-2-oxobutanoate: step 3/4. Its function is as follows. Catalyzes the oxidation of 3-carboxy-2-hydroxy-4-methylpentanoate (3-isopropylmalate) to 3-carboxy-4-methyl-2-oxopentanoate. The product decarboxylates to 4-methyl-2 oxopentanoate. The protein is 3-isopropylmalate dehydrogenase (leuB) of Arthrospira platensis (Spirulina platensis).